Here is an 827-residue protein sequence, read N- to C-terminus: Lon protease 2 (827 aa).

The segment at 1 to 22 (MSDEKKKGSAASAMPTAMAPPG) is disordered. Residues 9–21 (SAASAMPTAMAPP) are compositionally biased toward low complexity. The region spanning 33–227 (LPILPLRNSV…LVLELLNRKR (195 aa)) is the Lon N-terminal domain. Residue 379 to 386 (GPPGVGKT) coordinates ATP. Positions 615-796 (TEVPGVATGL…DDVLKAALET (182 aa)) constitute a Lon proteolytic domain. Catalysis depends on residues S702 and K745. Residues 799 to 827 (VGVAGTPGGEPGKEAPLPKPAESAPEVRA) are disordered.

The protein belongs to the peptidase S16 family. As to quaternary structure, homohexamer. Organized in a ring with a central cavity.

It is found in the cytoplasm. The enzyme catalyses Hydrolysis of proteins in presence of ATP.. Its function is as follows. ATP-dependent serine protease that mediates the selective degradation of mutant and abnormal proteins as well as certain short-lived regulatory proteins. Required for cellular homeostasis and for survival from DNA damage and developmental changes induced by stress. Degrades polypeptides processively to yield small peptide fragments that are 5 to 10 amino acids long. Binds to DNA in a double-stranded, site-specific manner. The sequence is that of Lon protease 2 from Myxococcus xanthus.